The sequence spans 129 residues: Glycine cleavage system H protein (129 aa).

Residues 24 to 106 (SYTVGITEHA…YGEGWFFRVM (83 aa)) form the Lipoyl-binding domain. N6-lipoyllysine is present on lysine 65.

This sequence belongs to the GcvH family. The glycine cleavage system is composed of four proteins: P, T, L and H. (R)-lipoate is required as a cofactor.

Functionally, the glycine cleavage system catalyzes the degradation of glycine. The H protein shuttles the methylamine group of glycine from the P protein to the T protein. The protein is Glycine cleavage system H protein of Shewanella putrefaciens (strain CN-32 / ATCC BAA-453).